A 630-amino-acid chain; its full sequence is MSVSSGVQILTKPETVDRRRSAETTKEAGRPLEMAVSEPEASAAEWKQLDPAQSNLYNDVMLENYCNQASMGCQAPKPDMISKLEKGEAPWLGKGKRPSQGCPSKIARPKQKETDGKVQKDDDQLENIQKSQNKLLREVAVKKKTQAKKNGSDCGSLGKKNNLHKKHVPSKKRLLKFESCGKILKQNLDLPDHSRNCVKRKSDAAKEHKKSFNHSLSDTRKGKKQTGKKHEKLSSHSSSDKCNKTGKKHDKLCCHSSSHIKQDKIQTGEKHEKSPSLSSSTKHEKPQACVKPYECNQCGKVLSHKQGLIDHQRVHTGEKPYECNECGIAFSQKSHLVVHQRTHTGEKPYECIQCGKAHGHKHALTDHLRIHTGEKPYECAECGKTFRHSSNLIQHVRSHTGEKPYECKECGKSFRYNSSLTEHVRTHTGEIPYECNECGKAFKYSSSLTKHMRIHTGEKPFECNECGKAFSKKSHLIIHQRTHTKEKPYKCNECGKAFGHSSSLTYHMRTHTGESPFECNQCGKGFKQIEGLTQHQRVHTGEKPYECNECGKAFSQKSHLIVHQRTHTGEKPYECNECEKAFNAKSQLVIHQRSHTGEKPYECNECGKTFKQNASLTKHVKTHSEDKSHE.

Disordered regions lie at residues 1–45, 77–172, and 193–285; these read MSVS…SAAE, KPDM…PSKK, and HSRN…KHEK. A compositionally biased stretch (basic and acidic residues) spans 14-30; the sequence is ETVDRRRSAETTKEAGR. The KRAB domain occupies 32–103; it reads LEMAVSEPEA…KGKRPSQGCP (72 aa). Residue Ser42 is modified to Phosphoserine. Positions 110–122 are enriched in basic and acidic residues; it reads KQKETDGKVQKDD. Basic residues predominate over residues 161–172; that stretch reads NNLHKKHVPSKK. Positions 193-206 are enriched in basic and acidic residues; it reads HSRNCVKRKSDAAK. The segment covering 221–231 has biased composition (basic residues); it reads KGKKQTGKKHE. Composition is skewed to basic and acidic residues over residues 232-243 and 260-274; these read KLSSHSSSDKCN and IKQD…HEKS. C2H2-type zinc fingers lie at residues 293–315 and 321–343; these read YECN…QRVH and YECN…QRTH. The C2H2-type 3; atypical zinc finger occupies 349-367; that stretch reads YECIQCGKAHGHKHALTDH. 9 consecutive C2H2-type zinc fingers follow at residues 377–399, 405–427, 433–455, 461–483, 489–511, 517–539, 545–567, 573–595, and 601–623; these read YECA…VRSH, YECK…VRTH, YECN…MRIH, FECN…QRTH, YKCN…MRTH, FECN…QRVH, YECN…QRTH, YECN…QRSH, and YECN…VKTH.

Belongs to the krueppel C2H2-type zinc-finger protein family. Expressed at low level in several tissues including fetal cartilage.

It is found in the nucleus. Its function is as follows. May be involved in transcriptional regulation. The polypeptide is Zinc finger protein 37 homolog (ZFP37) (Homo sapiens (Human)).